Reading from the N-terminus, the 152-residue chain is UPF0735 ACT domain-containing protein CTC_00116 (152 aa).

The ACT domain occupies 76–151 (IISVTLNHRP…NVIKLDLIAM (76 aa)).

Belongs to the UPF0735 family.

The protein is UPF0735 ACT domain-containing protein CTC_00116 of Clostridium tetani (strain Massachusetts / E88).